A 379-amino-acid chain; its full sequence is Cytochrome b (379 aa).

Transmembrane regions (helical) follow at residues phenylalanine 33–methionine 53, tryptophan 77–isoleucine 98, tryptophan 113–leucine 133, and phenylalanine 178–leucine 198. Residues histidine 83 and histidine 97 each coordinate heme b. The heme b site is built by histidine 182 and histidine 196. Histidine 201 is an a ubiquinone binding site. Helical transmembrane passes span tyrosine 226–tyrosine 246, leucine 288–histidine 308, alanine 320–glycine 340, and tyrosine 347–proline 367.

The protein belongs to the cytochrome b family. The cytochrome bc1 complex contains 3 respiratory subunits (MT-CYB, CYC1 and UQCRFS1), 2 core proteins (UQCRC1 and UQCRC2) and probably 6 low-molecular weight proteins. It depends on heme b as a cofactor.

It is found in the mitochondrion inner membrane. In terms of biological role, component of the ubiquinol-cytochrome c reductase complex (complex III or cytochrome b-c1 complex) that is part of the mitochondrial respiratory chain. The b-c1 complex mediates electron transfer from ubiquinol to cytochrome c. Contributes to the generation of a proton gradient across the mitochondrial membrane that is then used for ATP synthesis. The protein is Cytochrome b (mt-cyb) of Anguilla reinhardtii (Speckled longfin eel).